Here is a 506-residue protein sequence, read N- to C-terminus: 2-isopropylmalate synthase (506 aa).

Residues 8-272 enclose the Pyruvate carboxyltransferase domain; that stretch reads LIVFDTTLRD…ETGIQLKEIL (265 aa). Asp17, His206, His208, and Asn242 together coordinate Mn(2+). Positions 396 to 506 are regulatory domain; that stretch reads ELEYVAVTVC…YLNAVNKALL (111 aa).

It belongs to the alpha-IPM synthase/homocitrate synthase family. LeuA type 1 subfamily. As to quaternary structure, homodimer. Requires Mn(2+) as cofactor.

Its subcellular location is the cytoplasm. The enzyme catalyses 3-methyl-2-oxobutanoate + acetyl-CoA + H2O = (2S)-2-isopropylmalate + CoA + H(+). Its pathway is amino-acid biosynthesis; L-leucine biosynthesis; L-leucine from 3-methyl-2-oxobutanoate: step 1/4. Catalyzes the condensation of the acetyl group of acetyl-CoA with 3-methyl-2-oxobutanoate (2-ketoisovalerate) to form 3-carboxy-3-hydroxy-4-methylpentanoate (2-isopropylmalate). In Methylacidiphilum infernorum (isolate V4) (Methylokorus infernorum (strain V4)), this protein is 2-isopropylmalate synthase.